The sequence spans 65 residues: Large ribosomal subunit protein bL35 (65 aa).

It belongs to the bacterial ribosomal protein bL35 family.

The protein is Large ribosomal subunit protein bL35 of Enterobacter sp. (strain 638).